The chain runs to 395 residues: Demethylmacrocin O-methyltransferase (395 aa).

It carries out the reaction demethylmacrocin + S-adenosyl-L-methionine = macrocin + S-adenosyl-L-homocysteine + H(+). The protein operates within antibiotic biosynthesis; tylosin biosynthesis. Functionally, O-methyltransferase that catalyzes the conversion of demethylmacrocin to macrocin, the penultimate step of tylosin antibiotic biosynthesis. Also able to mediate the conversion of demethyllactenocin to lactenocin. In Streptomyces fradiae (Streptomyces roseoflavus), this protein is Demethylmacrocin O-methyltransferase (tylE).